The primary structure comprises 461 residues: ATP synthase subunit beta (461 aa).

151–158 serves as a coordination point for ATP; it reads GGAGVGKT.

This sequence belongs to the ATPase alpha/beta chains family. As to quaternary structure, F-type ATPases have 2 components, CF(1) - the catalytic core - and CF(0) - the membrane proton channel. CF(1) has five subunits: alpha(3), beta(3), gamma(1), delta(1), epsilon(1). CF(0) has three main subunits: a(1), b(2) and c(9-12). The alpha and beta chains form an alternating ring which encloses part of the gamma chain. CF(1) is attached to CF(0) by a central stalk formed by the gamma and epsilon chains, while a peripheral stalk is formed by the delta and b chains.

The protein resides in the cell inner membrane. It carries out the reaction ATP + H2O + 4 H(+)(in) = ADP + phosphate + 5 H(+)(out). Produces ATP from ADP in the presence of a proton gradient across the membrane. The catalytic sites are hosted primarily by the beta subunits. The polypeptide is ATP synthase subunit beta (Colwellia psychrerythraea (strain 34H / ATCC BAA-681) (Vibrio psychroerythus)).